We begin with the raw amino-acid sequence, 198 residues long: Superoxide dismutase [Mn], mitochondrial (198 aa).

Residue H26 coordinates Mn(2+). Y34 bears the 3'-nitrotyrosine mark. Residues K44 and K51 each carry the N6-acetyllysine; alternate modification. Residues K44 and K51 each carry the N6-succinyllysine; alternate modification. H74 provides a ligand contact to Mn(2+). N6-acetyllysine is present on K90. Residues K98 and K106 each carry the N6-acetyllysine; alternate modification. An N6-succinyllysine; alternate mark is found at K98 and K106. Mn(2+)-binding residues include D159 and H163. The residue at position 178 (K178) is an N6-acetyllysine.

Belongs to the iron/manganese superoxide dismutase family. Homotetramer. Mn(2+) serves as cofactor. In terms of processing, nitrated under oxidative stress. Nitration coupled with oxidation inhibits the catalytic activity. Acetylation at Lys-98 decreases enzymatic activity. Deacetylated by SIRT3 upon exposure to ionizing radiations or after long fasting. Post-translationally, polyubiquitinated; leading to proteasomal degradation. Deubiquitinated by USP36 which increases protein stability.

It is found in the mitochondrion matrix. It carries out the reaction 2 superoxide + 2 H(+) = H2O2 + O2. Destroys superoxide anion radicals which are normally produced within the cells and which are toxic to biological systems. The chain is Superoxide dismutase [Mn], mitochondrial (SOD2) from Macaca fuscata fuscata (Japanese macaque).